The primary structure comprises 153 residues: Putative nuclear shuttle protein (153 aa).

This sequence belongs to the nanoviridae nuclear shuttle protein family.

It is found in the host nucleus. Its subcellular location is the host cytoplasm. Putative nuclear shuttle protein. The protein is Putative nuclear shuttle protein (DNA-N) of Cicer arietinum (Chickpea).